Consider the following 430-residue polypeptide: Transcription factor E2F1 (430 aa).

The segment at 62 to 103 is cyclin A:CDK2 binding; sequence ATPQAPRPAPSAPRPALGRPPVKRRLDLETDHQYLAGSSGPF. An interaction with BIRC2/c-IAP1 region spans residues 84 to 186; it reads KRRLDLETDH…KKSKNHIQWL (103 aa). Residues 95–123 form a disordered region; sequence YLAGSSGPFRGRGRHPGKGVKSPGEKSRY. The DNA-binding element occupies 105-189; that stretch reads GRGRHPGKGV…KNHIQWLGSH (85 aa). An N6-acetyllysine mark is found at K112, K115, and K120. The leucine-zipper stretch occupies residues 148–169; sequence LNWAAEVLKVQKRRIYDITNVL. The short motif at 153 to 189 is the DEF box element; that stretch reads EVLKVQKRRIYDITNVLEGIQLIAKKSKNHIQWLGSH. N6-methyllysine; by SETD7 is present on K180. Positions 187 to 375 are required for interaction with TRIM28; the sequence is GSHTMVGIGK…QLSPLVAADS (189 aa). A dimerization region spans residues 190–279; that stretch reads TMVGIGKRLE…AVDSSETFQI (90 aa). The interval 294 to 340 is disordered; that stretch reads PEESADGISPGKTSCQETSSGEDRTADSGPAGPPPSPPSTSPALDPS. The span at 324–333 shows a compositional bias: pro residues; it reads AGPPPSPPST. Positions 361–430 are transactivation; it reads PMEEDQLSPL…DFGDLTPLDF (70 aa). Phosphoserine is present on residues S368 and S396. The interval 402-419 is RB1 binding; it reads LDYHFGLEEGEGIRDLFD. The residue at position 426 (T426) is a Phosphothreonine.

It belongs to the E2F/DP family. Component of the DRTF1/E2F transcription factor complex. Forms heterodimers with DP family members. The E2F1 complex binds specifically hypophosphorylated RB1, the interaction represses E2F1-driven transcription. During the cell cycle, RB1 becomes phosphorylated in mid-to-late G1 phase, detaches from the DRTF1/E2F complex, rendering E2F transcriptionally active. Interacts with TRRAP, which probably mediates its interaction with histone acetyltransferase complexes, leading to transcription activation. Binds TOPBP1 and EAPP. Interacts with ARID3A. Interacts with TRIM28; the interaction inhibits E2F1 acetylation through recruiting HDAC1 and represses its transcriptional activity. Interaction with KAT2B; the interaction acetylates E2F1 enhancing its DNA-binding and transcriptional activity. Interacts with BIRC2/c-IAP1 (via BIR domains). The complex TFDP1:E2F1 interacts with CEBPA; the interaction prevents CEBPA binding to target genes promoters and represses its transcriptional activity. Interacts with RRP1B. Interacts with HCFC1. Interacts with KMT2E; the interaction is probably indirect and is mediated via HCFC1. Interacts with DCAF5 and L3MBTL3; the interaction requires methylation at Lys-180 and is necessary to target E2F1 for ubiquitination by the CRL4-DCAF5 E3 ubiquitin ligase complex. Phosphorylated by CDK2 and cyclin A-CDK2 in the S-phase. Phosphorylation by CHEK2 stabilizes E2F1 upon DNA damage and regulates its effect on transcription and apoptosis. Phosphorylation at Ser-396 by GSK3B promotes interaction with USP11, leading to its deubiquitination and stabilization. Post-translationally, ubiquitinated via 'Lys-63'-linked ubiquitin, leading to its degradation. Deubiquitinated by USP11 following phosphorylation by GSK3B, promoting its stability. In terms of processing, acetylation stimulates DNA-binding. Enhanced under stress conditions such as DNA damage and inhibited by retinoblastoma protein RB1. Regulated by KAP1/TRIM28 which recruits HDAC1 to E2F1 resulting in deacetylation. Acetylated by P/CAF/KAT2B. Methylation at Lys-180 by SETD7 promotes E2F1 ubiquitin-dependent proteasomal degradation.

It localises to the nucleus. Its activity is regulated as follows. BIRC2/c-IAP1 stimulates its transcriptional activity. In terms of biological role, transcription activator that binds DNA cooperatively with DP proteins through the E2 recognition site, 5'-TTTC[CG]CGC-3' found in the promoter region of a number of genes whose products are involved in cell cycle regulation or in DNA replication. The DRTF1/E2F complex functions in the control of cell-cycle progression from G1 to S phase. E2F1 binds preferentially RB1 in a cell-cycle dependent manner. It can mediate both cell proliferation and TP53/p53-dependent apoptosis. Blocks adipocyte differentiation by binding to specific promoters repressing CEBPA binding to its target gene promoters. Directly activates transcription of PEG10. Positively regulates transcription of RRP1B. This is Transcription factor E2F1 from Mus musculus (Mouse).